Reading from the N-terminus, the 200-residue chain is Cysteine dioxygenase type 1 (200 aa).

Fe cation contacts are provided by histidine 86, histidine 88, and histidine 140. Positions 93–157 (CFLKLLQGNL…TEPAVSLHLY (65 aa)) form a cross-link, 3'-(S-cysteinyl)-tyrosine (Cys-Tyr).

Belongs to the cysteine dioxygenase family. Monomer. Fe(2+) serves as cofactor. The cofactor is Ni(2+). Requires Zn(2+) as cofactor. Post-translationally, the thioether cross-link between Cys-93 and Tyr-157 plays a structural role through stabilizing the Fe(2+) ion, and prevents the production of highly damaging free hydroxyl radicals by holding the oxygen radical via hydroxyl hydrogen. Highest expression in liver. Also expressed in kidney, lung, brain and small intestine.

It catalyses the reaction L-cysteine + O2 = 3-sulfino-L-alanine + H(+). It functions in the pathway organosulfur biosynthesis; taurine biosynthesis; hypotaurine from L-cysteine: step 1/2. In terms of biological role, catalyzes the oxidation of cysteine to cysteine sulfinic acid with addition of molecular dioxygen. This Mus musculus (Mouse) protein is Cysteine dioxygenase type 1 (Cdo1).